Reading from the N-terminus, the 272-residue chain is Merozoite surface protein 2 (272 aa).

The N-terminal stretch at 1-20 (MKVIKTLSIINFFIFVTFNI) is a signal peptide. 2 N-linked (GlcNAc...) asparagine glycosylation sites follow: asparagine 22 and asparagine 36. Residues 44–198 (AESKPSTGAG…EQTESPELQS (155 aa)) are polymorphic region. Residues 45 to 233 (ESKPSTGAGG…DSQKECTDGN (189 aa)) are disordered. Residues 51–82 (GAGGSAGGSAGGSAGGSAGGSAGGSAGSGDGN) show a composition bias toward gly residues. 6 repeat units span residues 53 to 56 (GGSA), 57 to 60 (GGSA), 61 to 64 (GGSA), 65 to 68 (GGSA), 69 to 72 (GGSA), and 73 to 76 (GGSA). Positions 53-76 (GGSAGGSAGGSAGGSAGGSAGGSA) are 6 X 4 AA tandem repeats of G-G-S-A. Residues 83-119 (GADAEGSSSTPATTTTTKTTTTTTTTNDAEASTSTSS) are compositionally biased toward low complexity. The span at 122-137 (PNHKNAETNPKGKGEV) shows a compositional bias: basic and acidic residues. Polar residues-rich tracts occupy residues 139–165 (EPNQ…NVPP) and 172–200 (KSPT…QSAP). A glycan (N-linked (GlcNAc...) asparagine) is linked at asparagine 149. Asparagine 221 is a glycosylation site (N-linked (GlcNAc...) asparagine). Cysteines 229 and 237 form a disulfide. Residues asparagine 245 and asparagine 246 are each glycosylated (N-linked (GlcNAc...) asparagine). Asparagine 246 carries GPI-anchor amidated asparagine lipidation. A propeptide spans 247–272 (SSNIASINKFVVLISATLVLSFAIFI) (removed in mature form).

Its subcellular location is the cell membrane. In terms of biological role, may play a role in the merozoite attachment to the erythrocyte. This chain is Merozoite surface protein 2, found in Plasmodium falciparum (isolate 3D7).